Consider the following 495-residue polypeptide: Iroquois-class homeodomain protein irx-4-B (495 aa).

Positions 141 to 203 form a DNA-binding region, homeobox; TALE-type; it reads GSTRRKNATR…NARRRLKKEN (63 aa). The disordered stretch occupies residues 203 to 245; sequence NKMTWPPRNKCSDEKRPYDEEEEEEEDSQKATIKNEKKTVDEE. The segment covering 235-245 has biased composition (basic and acidic residues); it reads IKNEKKTVDEE.

Belongs to the TALE/IRO homeobox family.

The protein localises to the nucleus. Its function is as follows. Acts partially redundantly with other irx members in neural patterning. Required for formation of the posterior forebrain, midbrain, hindbrain, and to a lesser extent, spinal cord. Patterns the neuroectoderm in both the anterior/posterior and dorsal/ventral axes. Does not appear to play a role in pronephros kidney development. This Xenopus laevis (African clawed frog) protein is Iroquois-class homeodomain protein irx-4-B (irx4-b).